The primary structure comprises 361 residues: Holliday junction branch migration complex subunit RuvB (361 aa).

Composition is skewed to basic and acidic residues over residues 1–13 (MSDVERTEFKLPE) and 33–43 (QGEHDIERSLR). The segment at 1–43 (MSDVERTEFKLPEGMDLSSPPQRNQDVDAAEQQGEHDIERSLR) is disordered. The tract at residues 2–203 (SDVERTEFKL…FGFTAQMEYY (202 aa)) is large ATPase domain (RuvB-L). Residues L42, R43, G84, K87, T88, T89, 150–152 (EDF), R193, Y203, and R240 each bind ATP. T88 provides a ligand contact to Mg(2+). The interval 204 to 274 (DTEDLTRVIS…AAQAALRVFD (71 aa)) is small ATPAse domain (RuvB-S). The interval 277 to 361 (ERGLDRLDRA…PEGAIGGTLF (85 aa)) is head domain (RuvB-H). DNA contacts are provided by R332 and R337.

It belongs to the RuvB family. As to quaternary structure, homohexamer. Forms an RuvA(8)-RuvB(12)-Holliday junction (HJ) complex. HJ DNA is sandwiched between 2 RuvA tetramers; dsDNA enters through RuvA and exits via RuvB. An RuvB hexamer assembles on each DNA strand where it exits the tetramer. Each RuvB hexamer is contacted by two RuvA subunits (via domain III) on 2 adjacent RuvB subunits; this complex drives branch migration. In the full resolvosome a probable DNA-RuvA(4)-RuvB(12)-RuvC(2) complex forms which resolves the HJ.

The protein localises to the cytoplasm. It catalyses the reaction ATP + H2O = ADP + phosphate + H(+). Functionally, the RuvA-RuvB-RuvC complex processes Holliday junction (HJ) DNA during genetic recombination and DNA repair, while the RuvA-RuvB complex plays an important role in the rescue of blocked DNA replication forks via replication fork reversal (RFR). RuvA specifically binds to HJ cruciform DNA, conferring on it an open structure. The RuvB hexamer acts as an ATP-dependent pump, pulling dsDNA into and through the RuvAB complex. RuvB forms 2 homohexamers on either side of HJ DNA bound by 1 or 2 RuvA tetramers; 4 subunits per hexamer contact DNA at a time. Coordinated motions by a converter formed by DNA-disengaged RuvB subunits stimulates ATP hydrolysis and nucleotide exchange. Immobilization of the converter enables RuvB to convert the ATP-contained energy into a lever motion, pulling 2 nucleotides of DNA out of the RuvA tetramer per ATP hydrolyzed, thus driving DNA branch migration. The RuvB motors rotate together with the DNA substrate, which together with the progressing nucleotide cycle form the mechanistic basis for DNA recombination by continuous HJ branch migration. Branch migration allows RuvC to scan DNA until it finds its consensus sequence, where it cleaves and resolves cruciform DNA. The sequence is that of Holliday junction branch migration complex subunit RuvB from Corynebacterium aurimucosum (strain ATCC 700975 / DSM 44827 / CIP 107346 / CN-1) (Corynebacterium nigricans).